The sequence spans 211 residues: Guanylate kinase (211 aa).

Positions 5 to 184 (GLLIVFSGPS…AAERVKRIIE (180 aa)) constitute a Guanylate kinase-like domain. Residue 12–19 (GPSGVGKG) coordinates ATP.

The protein belongs to the guanylate kinase family.

It localises to the cytoplasm. It carries out the reaction GMP + ATP = GDP + ADP. Its function is as follows. Essential for recycling GMP and indirectly, cGMP. This chain is Guanylate kinase, found in Streptococcus pyogenes serotype M3 (strain SSI-1).